A 203-amino-acid polypeptide reads, in one-letter code: Probable flagellin 1 (203 aa).

The propeptide occupies 1-6 (MRRRRG).

It belongs to the archaeal flagellin family.

Its subcellular location is the archaeal flagellum. Flagellin is the subunit protein which polymerizes to form the filaments of archaeal flagella. In Aeropyrum pernix (strain ATCC 700893 / DSM 11879 / JCM 9820 / NBRC 100138 / K1), this protein is Probable flagellin 1 (flaB1).